A 435-amino-acid polypeptide reads, in one-letter code: Probable glycine dehydrogenase (decarboxylating) subunit 1 (435 aa).

This sequence belongs to the GcvP family. N-terminal subunit subfamily. In terms of assembly, the glycine cleavage system is composed of four proteins: P, T, L and H. In this organism, the P 'protein' is a heterodimer of two subunits.

The catalysed reaction is N(6)-[(R)-lipoyl]-L-lysyl-[glycine-cleavage complex H protein] + glycine + H(+) = N(6)-[(R)-S(8)-aminomethyldihydrolipoyl]-L-lysyl-[glycine-cleavage complex H protein] + CO2. In terms of biological role, the glycine cleavage system catalyzes the degradation of glycine. The P protein binds the alpha-amino group of glycine through its pyridoxal phosphate cofactor; CO(2) is released and the remaining methylamine moiety is then transferred to the lipoamide cofactor of the H protein. The sequence is that of Probable glycine dehydrogenase (decarboxylating) subunit 1 from Coprothermobacter proteolyticus (strain ATCC 35245 / DSM 5265 / OCM 4 / BT).